We begin with the raw amino-acid sequence, 454 residues long: Bifunctional protein GlmU (454 aa).

Residues 1–233 (MQATPRPLAL…EAETIGINSR (233 aa)) are pyrophosphorylase. Residues 13-16 (LAAG), Lys-27, Gln-80, 85-86 (GT), 108-110 (YGD), Gly-145, Glu-159, Asn-174, and Asn-231 contribute to the UDP-N-acetyl-alpha-D-glucosamine site. Position 110 (Asp-110) interacts with Mg(2+). Asn-231 lines the Mg(2+) pocket. A linker region spans residues 234 to 254 (AELVRAEAQFQSQRRAALIEA). Residues 255-454 (GVTMQAPDSV…KAIKDAKSKD (200 aa)) are N-acetyltransferase. The UDP-N-acetyl-alpha-D-glucosamine site is built by Arg-320 and Lys-338. His-350 serves as the catalytic Proton acceptor. UDP-N-acetyl-alpha-D-glucosamine contacts are provided by Tyr-353 and Asn-364. Residues Ala-367, 373–374 (NY), Ser-392, Ser-410, and Arg-427 contribute to the acetyl-CoA site.

The protein in the N-terminal section; belongs to the N-acetylglucosamine-1-phosphate uridyltransferase family. This sequence in the C-terminal section; belongs to the transferase hexapeptide repeat family. In terms of assembly, homotrimer. Requires Mg(2+) as cofactor.

Its subcellular location is the cytoplasm. It carries out the reaction alpha-D-glucosamine 1-phosphate + acetyl-CoA = N-acetyl-alpha-D-glucosamine 1-phosphate + CoA + H(+). The catalysed reaction is N-acetyl-alpha-D-glucosamine 1-phosphate + UTP + H(+) = UDP-N-acetyl-alpha-D-glucosamine + diphosphate. It functions in the pathway nucleotide-sugar biosynthesis; UDP-N-acetyl-alpha-D-glucosamine biosynthesis; N-acetyl-alpha-D-glucosamine 1-phosphate from alpha-D-glucosamine 6-phosphate (route II): step 2/2. Its pathway is nucleotide-sugar biosynthesis; UDP-N-acetyl-alpha-D-glucosamine biosynthesis; UDP-N-acetyl-alpha-D-glucosamine from N-acetyl-alpha-D-glucosamine 1-phosphate: step 1/1. It participates in bacterial outer membrane biogenesis; LPS lipid A biosynthesis. Catalyzes the last two sequential reactions in the de novo biosynthetic pathway for UDP-N-acetylglucosamine (UDP-GlcNAc). The C-terminal domain catalyzes the transfer of acetyl group from acetyl coenzyme A to glucosamine-1-phosphate (GlcN-1-P) to produce N-acetylglucosamine-1-phosphate (GlcNAc-1-P), which is converted into UDP-GlcNAc by the transfer of uridine 5-monophosphate (from uridine 5-triphosphate), a reaction catalyzed by the N-terminal domain. The chain is Bifunctional protein GlmU from Jannaschia sp. (strain CCS1).